The sequence spans 307 residues: HPr kinase/phosphorylase (307 aa).

Active-site residues include His-136 and Lys-157. 151-158 provides a ligand contact to ATP; that stretch reads GESGIGKS. Ser-158 provides a ligand contact to Mg(2+). Residue Asp-175 is the Proton acceptor; for phosphorylation activity. Proton donor; for dephosphorylation activity of the active site. Residues 198–207 are important for the catalytic mechanism of both phosphorylation and dephosphorylation; that stretch reads LEVRGMGIID. Glu-199 lines the Mg(2+) pocket. The active site involves Arg-240. Residues 261–266 are important for the catalytic mechanism of dephosphorylation; it reads PIRPGR.

The protein belongs to the HPrK/P family. In terms of assembly, homohexamer. The cofactor is Mg(2+).

It catalyses the reaction [HPr protein]-L-serine + ATP = [HPr protein]-O-phospho-L-serine + ADP + H(+). It carries out the reaction [HPr protein]-O-phospho-L-serine + phosphate + H(+) = [HPr protein]-L-serine + diphosphate. Functionally, catalyzes the ATP- as well as the pyrophosphate-dependent phosphorylation of a specific serine residue in HPr, a phosphocarrier protein of the phosphoenolpyruvate-dependent sugar phosphotransferase system (PTS). HprK/P also catalyzes the pyrophosphate-producing, inorganic phosphate-dependent dephosphorylation (phosphorolysis) of seryl-phosphorylated HPr (P-Ser-HPr). The two antagonistic activities of HprK/P are regulated by several intracellular metabolites, which change their concentration in response to the absence or presence of rapidly metabolisable carbon sources (glucose, fructose, etc.) in the growth medium. Therefore, by controlling the phosphorylation state of HPr, HPrK/P is a sensor enzyme that plays a major role in the regulation of carbon metabolism and sugar transport: it mediates carbon catabolite repression (CCR), and regulates PTS-catalyzed carbohydrate uptake and inducer exclusion. The protein is HPr kinase/phosphorylase of Clostridium novyi (strain NT).